The chain runs to 545 residues: Chaperonin GroEL (545 aa).

ATP contacts are provided by residues 29-32 (TLGP), Lys-50, 86-90 (DGTTT), Gly-413, and Asp-495.

This sequence belongs to the chaperonin (HSP60) family. Forms a cylinder of 14 subunits composed of two heptameric rings stacked back-to-back. Interacts with the co-chaperonin GroES.

It localises to the cytoplasm. The catalysed reaction is ATP + H2O + a folded polypeptide = ADP + phosphate + an unfolded polypeptide.. Functionally, together with its co-chaperonin GroES, plays an essential role in assisting protein folding. The GroEL-GroES system forms a nano-cage that allows encapsulation of the non-native substrate proteins and provides a physical environment optimized to promote and accelerate protein folding. This Borrelia garinii subsp. bavariensis (strain ATCC BAA-2496 / DSM 23469 / PBi) (Borreliella bavariensis) protein is Chaperonin GroEL.